A 513-amino-acid chain; its full sequence is ATP synthase subunit alpha 2 (513 aa).

Residue G169–T176 participates in ATP binding.

It belongs to the ATPase alpha/beta chains family. As to quaternary structure, F-type ATPases have 2 components, CF(1) - the catalytic core - and CF(0) - the membrane proton channel. CF(1) has five subunits: alpha(3), beta(3), gamma(1), delta(1), epsilon(1). CF(0) has three main subunits: a(1), b(2) and c(9-12). The alpha and beta chains form an alternating ring which encloses part of the gamma chain. CF(1) is attached to CF(0) by a central stalk formed by the gamma and epsilon chains, while a peripheral stalk is formed by the delta and b chains.

The protein resides in the cell inner membrane. The catalysed reaction is ATP + H2O + 4 H(+)(in) = ADP + phosphate + 5 H(+)(out). Functionally, produces ATP from ADP in the presence of a proton gradient across the membrane. The alpha chain is a regulatory subunit. The chain is ATP synthase subunit alpha 2 from Photobacterium profundum (strain SS9).